We begin with the raw amino-acid sequence, 729 residues long: Fatty acid oxidation complex subunit alpha (729 aa).

Residues 1–189 (MLYKGDTLYL…KVGLVDAVVK (189 aa)) form an enoyl-CoA hydratase/isomerase region. Residue Asp-296 participates in substrate binding. The 3-hydroxyacyl-CoA dehydrogenase stretch occupies residues 311–729 (ETPKQAAVLG…AQPVGELQTA (419 aa)). Residues Met-324, Asp-343, 400-402 (VVE), Lys-407, and Ser-429 each bind NAD(+). His-450 serves as the catalytic For 3-hydroxyacyl-CoA dehydrogenase activity. Position 453 (Asn-453) interacts with NAD(+). Substrate is bound by residues Asn-500 and Tyr-660. The interval 708–729 (SHNAPYYPQVEPAQPVGELQTA) is disordered.

It in the N-terminal section; belongs to the enoyl-CoA hydratase/isomerase family. The protein in the C-terminal section; belongs to the 3-hydroxyacyl-CoA dehydrogenase family. Heterotetramer of two alpha chains (FadB) and two beta chains (FadA).

It catalyses the reaction a (3S)-3-hydroxyacyl-CoA + NAD(+) = a 3-oxoacyl-CoA + NADH + H(+). The enzyme catalyses a (3S)-3-hydroxyacyl-CoA = a (2E)-enoyl-CoA + H2O. It carries out the reaction a 4-saturated-(3S)-3-hydroxyacyl-CoA = a (3E)-enoyl-CoA + H2O. The catalysed reaction is (3S)-3-hydroxybutanoyl-CoA = (3R)-3-hydroxybutanoyl-CoA. It catalyses the reaction a (3Z)-enoyl-CoA = a 4-saturated (2E)-enoyl-CoA. The enzyme catalyses a (3E)-enoyl-CoA = a 4-saturated (2E)-enoyl-CoA. It functions in the pathway lipid metabolism; fatty acid beta-oxidation. Functionally, involved in the aerobic and anaerobic degradation of long-chain fatty acids via beta-oxidation cycle. Catalyzes the formation of 3-oxoacyl-CoA from enoyl-CoA via L-3-hydroxyacyl-CoA. It can also use D-3-hydroxyacyl-CoA and cis-3-enoyl-CoA as substrate. The protein is Fatty acid oxidation complex subunit alpha of Cronobacter sakazakii (strain ATCC BAA-894) (Enterobacter sakazakii).